Reading from the N-terminus, the 289-residue chain is UPF0276 protein BB1291 (289 aa).

The protein belongs to the UPF0276 family.

The protein is UPF0276 protein BB1291 of Bordetella bronchiseptica (strain ATCC BAA-588 / NCTC 13252 / RB50) (Alcaligenes bronchisepticus).